An 833-amino-acid polypeptide reads, in one-letter code: Scavenger receptor class F member 2 (833 aa).

Residues 1 to 33 form the signal peptide; that stretch reads MEGAGSRGAGPARRQGARGLGLLLLLWLLPGLA. Residues 34 to 433 are Extracellular-facing; it reads APQDLNPRGR…ACHLETNQRK (400 aa). EGF-like domains follow at residues 63–102, 114–145, 140–174, 175–204, 205–233, and 228–262; these read LGDECGIAVCEGNSTCSENEVCVRPGECRCRHGYFGANCD, CKERCSCHPHGQCEDVTGQCTCHARRWGARCE, WGARCEHACQCQHGTCHPRSGACRCEPGWWGAQCA, SACYCSATSRCDPQTGACLCHVGWWGRSCN, NQCACNSSPCEQQSGRCQCRERMFGARCD, and FGARCDRYCQCSHGRCHPVDGTCACDPGYRGKYCR. Cystine bridges form between C67/C78, C72/C90, C92/C101, C118/C126, C120/C133, C135/C144, C148/C155, C150/C162, C164/C173, C177/C185, C179/C192, C194/C203, C207/C214, C209/C221, C223/C232, C236/C243, C238/C250, and C252/C261. Residue N75 is glycosylated (N-linked (GlcNAc...) asparagine). N-linked (GlcNAc...) asparagine glycosylation is found at N302 and N357. The EGF-like 7 domain occupies 364 to 395; it reads CAFVCSDCGSGHCDFQSGRCLCSPGVHGPHCN. Cystine bridges form between C368-C376, C371-C383, and C385-C394. N-linked (GlcNAc...) asparagine glycosylation occurs at N395. A helical transmembrane segment spans residues 434 to 454; the sequence is GVMGAGALLTLLLGLLLSLLG. At 455–833 the chain is on the cytoplasmic side; the sequence is CCCACRGKDS…SRAGTAPGAS (379 aa). Residues S538 and S600 each carry the phosphoserine modification. Positions 578 to 833 are disordered; it reads SLEPTGTSTP…SRAGTAPGAS (256 aa). Phosphotyrosine is present on Y615. The segment covering 619 to 630 has biased composition (basic and acidic residues); that stretch reads ARREARPARTRN. S638, S640, and S695 each carry phosphoserine. Residue T712 is modified to Phosphothreonine. Positions 748 to 761 are enriched in basic and acidic residues; sequence ELRDKTRSLGRAEK. The segment covering 781–798 has biased composition (low complexity); it reads ASASEASGSEKAAASAPA. Basic residues predominate over residues 804–816; it reads KKTPIQKPPRKKS.

As to quaternary structure, homophilic and heterophilic interaction via its extracellular domain. Interacts with SCARF1. The heterophilic interaction with SCARF1, which is stronger than the homophilic interaction with itself, is suppressed by the presence of SCARF1 ligand such as Ac-LDL.

Its subcellular location is the membrane. Probable adhesion protein, which mediates homophilic and heterophilic interactions. In contrast to SCARF1, it poorly mediates the binding and degradation of acetylated low density lipoprotein (Ac-LDL). The polypeptide is Scavenger receptor class F member 2 (Scarf2) (Mus musculus (Mouse)).